The following is a 143-amino-acid chain: Large ribosomal subunit protein uL13 (143 aa).

This sequence belongs to the universal ribosomal protein uL13 family. Part of the 50S ribosomal subunit.

This protein is one of the early assembly proteins of the 50S ribosomal subunit, although it is not seen to bind rRNA by itself. It is important during the early stages of 50S assembly. In Natranaerobius thermophilus (strain ATCC BAA-1301 / DSM 18059 / JW/NM-WN-LF), this protein is Large ribosomal subunit protein uL13.